The primary structure comprises 172 residues: TGEKPFSCSDCGARFTYRSLLRRHNKIHAEGKSLICSECGKPFTSESALTAHQRSHGGEKPFSCTDCEKCFAQRMHLIEHQRTHTGEKPFSCTVCGEMFTYRAQFSKHMLKHKRKRTEGESLDCSHCGKHFTSRSDLTVHRKSHKGKSPLQCSDCGKCFKYQSQLASHQRVH.

6 C2H2-type zinc fingers span residues 6–28, 34–56, 62–84, 90–112, 122–144, and 150–172; these read FSCS…NKIH, LICS…QRSH, FSCT…QRTH, FSCT…MLKH, LDCS…RKSH, and LQCS…QRVH.

It belongs to the krueppel C2H2-type zinc-finger protein family.

It localises to the nucleus. May be involved in transcriptional regulation. This Xenopus laevis (African clawed frog) protein is Gastrula zinc finger protein XlCGF51.1A.